The following is a 185-amino-acid chain: Lactoylglutathione lyase (185 aa).

The tract at residues 1–21 (MASEAKESPANNPGLSTVRDE) is disordered. In terms of domain architecture, VOC spans 27-174 (IMQQTMFRVK…DGYWIEIFDL (148 aa)). 2 residues coordinate substrate: Q30 and R34. Q30 is a Zn(2+) binding site. E96 contributes to the Zn(2+) binding site. Substrate contacts are provided by residues N100, R120, H124, and 154-155 (KM). Position 124 (H124) interacts with Zn(2+). E170 provides a ligand contact to Zn(2+). The Proton donor/acceptor role is filled by E170.

The protein belongs to the glyoxalase I family. Zn(2+) serves as cofactor.

It catalyses the reaction (R)-S-lactoylglutathione = methylglyoxal + glutathione. The protein operates within secondary metabolite metabolism; methylglyoxal degradation; (R)-lactate from methylglyoxal: step 1/2. Its function is as follows. Catalyzes the conversion of hemimercaptal, formed from methylglyoxal and glutathione, to S-lactoylglutathione. This Brassica juncea (Indian mustard) protein is Lactoylglutathione lyase (GLY I).